We begin with the raw amino-acid sequence, 142 residues long: Large ribosomal subunit protein uL13 (142 aa).

It belongs to the universal ribosomal protein uL13 family. As to quaternary structure, part of the 50S ribosomal subunit.

In terms of biological role, this protein is one of the early assembly proteins of the 50S ribosomal subunit, although it is not seen to bind rRNA by itself. It is important during the early stages of 50S assembly. The sequence is that of Large ribosomal subunit protein uL13 from Proteus mirabilis (strain HI4320).